The chain runs to 253 residues: uncharacterized protein (253 aa).

10–34 serves as a coordination point for NADP(+); that stretch reads LVTGASSGLGRGLALWLARRGVRVF. Residue Ser142 participates in substrate binding. Catalysis depends on Tyr155, which acts as the Proton acceptor.

It belongs to the short-chain dehydrogenases/reductases (SDR) family.

This is an uncharacterized protein from Myxococcus xanthus (strain DK1622).